The sequence spans 555 residues: Spermine oxidase (555 aa).

FAD contacts are provided by residues A35, E55, R63, T79–W80, and V261. A disordered region spans residues A271–E307. Residues R274–G291 show a composition bias toward basic and acidic residues. FAD contacts are provided by residues E519 and T528–T529.

This sequence belongs to the flavin monoamine oxidase family. It depends on FAD as a cofactor. As to expression, widely expressed. Isoform 1 and isoform 2 are expressed at higher level in brain and skeletal muscle. Isoform 7 is found in brain and spleen, isoform 10 is widely expressed but found at lower level in heart, kidney, liver and lung.

The protein localises to the cytoplasm. Its subcellular location is the nucleus. It carries out the reaction spermine + O2 + H2O = 3-aminopropanal + spermidine + H2O2. Its pathway is amine and polyamine degradation; spermine degradation. Functionally, flavoenzyme which catalyzes the oxidation of spermine to spermidine. Can also use N(1)-acetylspermine and spermidine as substrates, with different affinity depending on the isoform (isozyme) and on the experimental conditions. Plays an important role in the regulation of polyamine intracellular concentration and has the potential to act as a determinant of cellular sensitivity to the antitumor polyamine analogs. May contribute to beta-alanine production via aldehyde dehydrogenase conversion of 3-amino-propanal. This is Spermine oxidase (Smox) from Mus musculus (Mouse).